Consider the following 396-residue polypeptide: Agropine synthesis cyclase (396 aa).

Belongs to the peptidase M24B family.

This is Agropine synthesis cyclase (ags) from Rhizobium rhizogenes (Agrobacterium rhizogenes).